A 116-amino-acid polypeptide reads, in one-letter code: Putative iron-sulfur cluster insertion protein ErpA (116 aa).

Iron-sulfur cluster is bound by residues cysteine 44, cysteine 108, and cysteine 110.

The protein belongs to the HesB/IscA family. In terms of assembly, homodimer. Requires iron-sulfur cluster as cofactor.

Its function is as follows. Required for insertion of 4Fe-4S clusters. This chain is Putative iron-sulfur cluster insertion protein ErpA, found in Janthinobacterium sp. (strain Marseille) (Minibacterium massiliensis).